A 408-amino-acid polypeptide reads, in one-letter code: CinA-like protein (408 aa).

The protein belongs to the CinA family.

This chain is CinA-like protein, found in Anaeromyxobacter dehalogenans (strain 2CP-1 / ATCC BAA-258).